We begin with the raw amino-acid sequence, 290 residues long: N-acetylmannosamine kinase (290 aa).

ATP contacts are provided by residues alanine 6–lysine 13 and glycine 132–leucine 139. Positions 156, 166, 168, and 173 each coordinate Zn(2+).

This sequence belongs to the ROK (NagC/XylR) family. NanK subfamily. Homodimer.

The catalysed reaction is an N-acyl-D-mannosamine + ATP = an N-acyl-D-mannosamine 6-phosphate + ADP + H(+). It functions in the pathway amino-sugar metabolism; N-acetylneuraminate degradation; D-fructose 6-phosphate from N-acetylneuraminate: step 2/5. In terms of biological role, catalyzes the phosphorylation of N-acetylmannosamine (ManNAc) to ManNAc-6-P. The chain is N-acetylmannosamine kinase from Yersinia pseudotuberculosis serotype O:1b (strain IP 31758).